The sequence spans 249 residues: MEWLDNAIILELGSFRESDVWVKLLTSQHGVISAFAFGGHRSRRRFCGCLGILNEIQVRVQTSRNGRFLNLQEASLINGPIQLRTNKNRFGAFINCIRFLEVVGVSSDAAPPVYTLMKELFYFFEKNTQPYEIIPILFRLRIASEQGYAPIFSNCAKCGRLINNKGFFGISDGIIVCSICINYIKTPIAIGYESLELLKRVQLASPYDWKLSENTKSAAAQKYECTEIINAFVEYHLGITWSKGRFLKV.

It belongs to the RecO family.

Functionally, involved in DNA repair and RecF pathway recombination. This Lawsonia intracellularis (strain PHE/MN1-00) protein is DNA repair protein RecO.